Here is a 63-residue protein sequence, read N- to C-terminus: Beta-defensin 3 (63 aa).

A signal peptide spans 1-20 (MRIHYLLFAFLLVLLSPPAA). Positions 21–22 (FS) are excised as a propeptide. Cystine bridges form between C31–C59, C38–C52, and C42–C60.

It belongs to the beta-defensin family. LAP/TAP subfamily. As to expression, highest expression in salivary glands, epididymis, ovary and pancreas and to a lesser extent in lung, liver and brain. Low or no expression in skeletal muscle and tongue.

The protein localises to the secreted. Functionally, antimicrobial activity against Gram-negative bacteria E.coli and P.aeruginosa. This is Beta-defensin 3 (Defb3) from Mus musculus (Mouse).